We begin with the raw amino-acid sequence, 122 residues long: Lithostathine (122 aa).

A signal peptide spans Met-1 to Gly-26. Positions Glu-27–Arg-37 are excised as a propeptide. The region spanning Ile-38–Trp-122 is the C-type lectin domain. A disulfide bond links Cys-40 and Cys-51.

As to quaternary structure, cleaved to give an A chain and a B chain joined by a disulfide bond. In terms of tissue distribution, in pancreatic acinar cells.

The protein resides in the secreted. Functionally, might act as an inhibitor of spontaneous calcium carbonate precipitation. The protein is Lithostathine (PTP) of Sus scrofa (Pig).